A 118-amino-acid polypeptide reads, in one-letter code: Large ribosomal subunit protein uL18 (118 aa).

It belongs to the universal ribosomal protein uL18 family. Part of the 50S ribosomal subunit; part of the 5S rRNA/L5/L18/L25 subcomplex. Contacts the 5S and 23S rRNAs.

This is one of the proteins that bind and probably mediate the attachment of the 5S RNA into the large ribosomal subunit, where it forms part of the central protuberance. In Zymomonas mobilis subsp. mobilis (strain ATCC 31821 / ZM4 / CP4), this protein is Large ribosomal subunit protein uL18.